We begin with the raw amino-acid sequence, 177 residues long: ATP synthase subunit b, chloroplastic (177 aa).

Residues 26–44 (IINLSIVLFVVIRFLGEAL) form a helical membrane-spanning segment.

It belongs to the ATPase B chain family. In terms of assembly, F-type ATPases have 2 components, F(1) - the catalytic core - and F(0) - the membrane proton channel. F(1) has five subunits: alpha(3), beta(3), gamma(1), delta(1), epsilon(1). F(0) has four main subunits: a(1), b(1), b'(1) and c(10-14). The alpha and beta chains form an alternating ring which encloses part of the gamma chain. F(1) is attached to F(0) by a central stalk formed by the gamma and epsilon chains, while a peripheral stalk is formed by the delta, b and b' chains.

It is found in the plastid. Its subcellular location is the chloroplast thylakoid membrane. In terms of biological role, f(1)F(0) ATP synthase produces ATP from ADP in the presence of a proton or sodium gradient. F-type ATPases consist of two structural domains, F(1) containing the extramembraneous catalytic core and F(0) containing the membrane proton channel, linked together by a central stalk and a peripheral stalk. During catalysis, ATP synthesis in the catalytic domain of F(1) is coupled via a rotary mechanism of the central stalk subunits to proton translocation. Functionally, component of the F(0) channel, it forms part of the peripheral stalk, linking F(1) to F(0). The chain is ATP synthase subunit b, chloroplastic from Bigelowiella natans (Pedinomonas minutissima).